Here is a 92-residue protein sequence, read N- to C-terminus: Co-chaperonin GroES (92 aa).

Belongs to the GroES chaperonin family. As to quaternary structure, heptamer of 7 subunits arranged in a ring. Interacts with the chaperonin GroEL.

It localises to the cytoplasm. Functionally, together with the chaperonin GroEL, plays an essential role in assisting protein folding. The GroEL-GroES system forms a nano-cage that allows encapsulation of the non-native substrate proteins and provides a physical environment optimized to promote and accelerate protein folding. GroES binds to the apical surface of the GroEL ring, thereby capping the opening of the GroEL channel. The sequence is that of Co-chaperonin GroES from Methanosarcina mazei (strain ATCC BAA-159 / DSM 3647 / Goe1 / Go1 / JCM 11833 / OCM 88) (Methanosarcina frisia).